The chain runs to 1442 residues: DNA-binding protein RFX7 (1442 aa).

The segment at 1-36 (MEEEQQQQQQQQQAQKMQGTEQSAQLPPSAPGALPA) is disordered. Positions 112 to 187 (AFSWIRNTLE…YCYSGLRKKA (76 aa)) form a DNA-binding region, RFX-type winged-helix. Residues 192–197 (PSLPNL) carry the PxLPxI/L motif motif. Disordered stretches follow at residues 406–426 (MQSV…GDRS), 485–514 (SAGT…KNGS), and 929–1001 (SVTP…SVPP). Residues 935–947 (TPTPTPTPTPTLT) are compositionally biased toward pro residues. Residues 957–995 (GTQSLSRESPCSRLAQTTPVDSALGSSRHTPVGTPHSNC) are compositionally biased toward polar residues.

Belongs to the RFX family.

The protein localises to the nucleus. Transcription factor. Acts as a transcriptional activator by binding to promoter regions of target genes. Plays a role in natural killer (NK) cell maintenance and immunity. Plays a role in the process of ciliogenesis in the neural tube and neural tube closure by regulating the expression of RFX4. The polypeptide is DNA-binding protein RFX7 (Xenopus laevis (African clawed frog)).